A 202-amino-acid chain; its full sequence is Large ribosomal subunit protein bL25 (202 aa).

It belongs to the bacterial ribosomal protein bL25 family. CTC subfamily. As to quaternary structure, part of the 50S ribosomal subunit; part of the 5S rRNA/L5/L18/L25 subcomplex. Contacts the 5S rRNA. Binds to the 5S rRNA independently of L5 and L18.

Functionally, this is one of the proteins that binds to the 5S RNA in the ribosome where it forms part of the central protuberance. The sequence is that of Large ribosomal subunit protein bL25 from Corynebacterium efficiens (strain DSM 44549 / YS-314 / AJ 12310 / JCM 11189 / NBRC 100395).